Here is a 98-residue protein sequence, read N- to C-terminus: Lactococcin-A immunity protein (98 aa).

Imparts immunity to lactococcin-A to naturally sensitive host strains. This chain is Lactococcin-A immunity protein (lciA), found in Lactococcus lactis subsp. cremoris (Streptococcus cremoris).